The sequence spans 166 residues: Ribonuclease H (166 aa).

The RNase H type-1 domain occupies 10 to 151 (KRVRVDMFTD…ADELARRGTS (142 aa)). Positions 19, 57, 79, and 143 each coordinate Mg(2+). Over residues 145–157 (LARRGTSEARQGK) the composition is skewed to basic and acidic residues. The segment at 145 to 166 (LARRGTSEARQGKVDGQSSTIL) is disordered.

This sequence belongs to the RNase H family. In terms of assembly, monomer. Requires Mg(2+) as cofactor.

The protein localises to the cytoplasm. The enzyme catalyses Endonucleolytic cleavage to 5'-phosphomonoester.. Endonuclease that specifically degrades the RNA of RNA-DNA hybrids. This chain is Ribonuclease H, found in Rhodospirillum rubrum (strain ATCC 11170 / ATH 1.1.1 / DSM 467 / LMG 4362 / NCIMB 8255 / S1).